The following is a 429-amino-acid chain: 3-phosphoshikimate 1-carboxyvinyltransferase (429 aa).

3-phosphoshikimate-binding residues include lysine 23, serine 24, and arginine 28. A phosphoenolpyruvate-binding site is contributed by lysine 23. Phosphoenolpyruvate contacts are provided by glycine 95 and arginine 123. 3-phosphoshikimate contacts are provided by serine 168, glutamine 170, aspartate 316, and lysine 343. Glutamine 170 serves as a coordination point for phosphoenolpyruvate. Aspartate 316 functions as the Proton acceptor in the catalytic mechanism. The phosphoenolpyruvate site is built by arginine 347 and arginine 389.

It belongs to the EPSP synthase family. As to quaternary structure, monomer.

It localises to the cytoplasm. It carries out the reaction 3-phosphoshikimate + phosphoenolpyruvate = 5-O-(1-carboxyvinyl)-3-phosphoshikimate + phosphate. The protein operates within metabolic intermediate biosynthesis; chorismate biosynthesis; chorismate from D-erythrose 4-phosphate and phosphoenolpyruvate: step 6/7. In terms of biological role, catalyzes the transfer of the enolpyruvyl moiety of phosphoenolpyruvate (PEP) to the 5-hydroxyl of shikimate-3-phosphate (S3P) to produce enolpyruvyl shikimate-3-phosphate and inorganic phosphate. This is 3-phosphoshikimate 1-carboxyvinyltransferase from Bacillus anthracis (strain A0248).